The chain runs to 237 residues: Flagellar L-ring protein (237 aa).

An N-terminal signal peptide occupies residues 1–24 (MNRPGFPRFSVLIASLCGITLLSG). Residue Cys25 is the site of N-palmitoyl cysteine attachment. Cys25 is lipidated: S-diacylglycerol cysteine.

It belongs to the FlgH family. In terms of assembly, the basal body constitutes a major portion of the flagellar organelle and consists of four rings (L,P,S, and M) mounted on a central rod.

Its subcellular location is the cell outer membrane. The protein resides in the bacterial flagellum basal body. Assembles around the rod to form the L-ring and probably protects the motor/basal body from shearing forces during rotation. This chain is Flagellar L-ring protein, found in Pseudomonas syringae pv. tomato (strain ATCC BAA-871 / DC3000).